The sequence spans 121 residues: Large ribosomal subunit protein uL14c (121 aa).

This sequence belongs to the universal ribosomal protein uL14 family. Part of the 50S ribosomal subunit.

Its subcellular location is the plastid. The protein localises to the chloroplast. Its function is as follows. Binds to 23S rRNA. The polypeptide is Large ribosomal subunit protein uL14c (Oedogonium cardiacum (Filamentous green alga)).